We begin with the raw amino-acid sequence, 492 residues long: Cobyric acid synthase (492 aa).

The GATase cobBQ-type domain occupies 252-440 (QLNVVVPVLT…LHGIFEQTEA (189 aa)). C333 (nucleophile) is an active-site residue. The active site involves H432.

The protein belongs to the CobB/CobQ family. CobQ subfamily.

It functions in the pathway cofactor biosynthesis; adenosylcobalamin biosynthesis. Its function is as follows. Catalyzes amidations at positions B, D, E, and G on adenosylcobyrinic A,C-diamide. NH(2) groups are provided by glutamine, and one molecule of ATP is hydrogenolyzed for each amidation. The chain is Cobyric acid synthase from Photobacterium profundum (strain SS9).